Here is a 299-residue protein sequence, read N- to C-terminus: Lathosterol oxidase (299 aa).

The next 3 membrane-spanning stretches (helical) occupy residues 32-52 (VSLL…CATL), 79-99 (FTVK…LLEL), and 117-137 (IHLI…IYWI). The region spanning 124 to 252 (ISFLFFTDML…YFTLWDRIGG (129 aa)) is the Fatty acid hydroxylase domain. The Histidine box-1 motif lies at 138–143 (HRGLHH). Residues 151-155 (HKPHH) carry the Histidine box-2 motif. A Histidine box-3 motif is present at residues 228-233 (HHTDHH). Position 253 is a phosphoserine (serine 253).

This sequence belongs to the sterol desaturase family. Fe cation serves as cofactor.

Its subcellular location is the endoplasmic reticulum membrane. It carries out the reaction a Delta(7)-sterol + 2 Fe(II)-[cytochrome b5] + O2 + 2 H(+) = a Delta(5),Delta(7)-sterol + 2 Fe(III)-[cytochrome b5] + 2 H2O. The catalysed reaction is lathosterol + 2 Fe(II)-[cytochrome b5] + O2 + 2 H(+) = 7-dehydrocholesterol + 2 Fe(III)-[cytochrome b5] + 2 H2O. The enzyme catalyses 5alpha-cholesta-7,24-dien-3beta-ol + 2 Fe(II)-[cytochrome b5] + O2 + 2 H(+) = 7-dehydrodesmosterol + 2 Fe(III)-[cytochrome b5] + 2 H2O. It participates in steroid biosynthesis; cholesterol biosynthesis. Its function is as follows. Catalyzes the penultimate step of the biosynthesis of cholesterol, the dehydrogenation of lathosterol into 7-dehydrocholesterol (7-DHC). Cholesterol is the major sterol component in mammalian membranes and a precursor for bile acid and steroid hormone synthesis. In addition to its essential role in cholesterol biosynthesis, it also indirectly regulates ferroptosis through the production of 7-DHC. By diverting the spread of damage caused by peroxyl radicals from the phospholipid components to its sterol nucleus, 7-DHC prevents this form of cell death. This chain is Lathosterol oxidase, found in Rattus norvegicus (Rat).